The following is a 1072-amino-acid chain: DNA-directed RNA polymerase subunit beta (1072 aa).

The protein belongs to the RNA polymerase beta chain family. As to quaternary structure, in plastids the minimal PEP RNA polymerase catalytic core is composed of four subunits: alpha, beta, beta', and beta''. When a (nuclear-encoded) sigma factor is associated with the core the holoenzyme is formed, which can initiate transcription.

The protein localises to the plastid. Its subcellular location is the chloroplast. The enzyme catalyses RNA(n) + a ribonucleoside 5'-triphosphate = RNA(n+1) + diphosphate. DNA-dependent RNA polymerase catalyzes the transcription of DNA into RNA using the four ribonucleoside triphosphates as substrates. This chain is DNA-directed RNA polymerase subunit beta, found in Barbarea verna (Land cress).